Reading from the N-terminus, the 1265-residue chain is Dynactin subunit 1 (1265 aa).

The CAP-Gly domain maps to 27–69 (GMTSFAVGKWVGVVLDEPKGKNSGSIKGQQYFQCDENCGMFVR). A disordered region spans residues 81–179 (GSRRSIEDVS…GNGAASHASS (99 aa)). A phosphoserine mark is found at serine 85, serine 110, serine 114, serine 117, and serine 121. Composition is skewed to low complexity over residues 103 to 138 (RLSS…SSSS) and 161 to 177 (AEGA…ASHA). At serine 183 the chain carries Phosphoserine. 3 coiled-coil regions span residues 213–570 (NSGA…ESLQ), 812–836 (LIQF…RLPS), and 967–1084 (QRAQ…NSTT). The disordered stretch occupies residues 1082 to 1106 (STTGKVQPGSESHSPHNISLSGNTS). Phosphoserine is present on serine 1117. Residues 1128 to 1160 (EEVELLKNAFNQERNQRLRLQAQDMRAKLSQFE) adopt a coiled-coil conformation.

This sequence belongs to the dynactin 150 kDa subunit family. Monomer and homodimer. Subunit of dynactin, a multiprotein complex part of a tripartite complex with dynein and a adapter, such as BICDL1, BICD2 or HOOK3. The dynactin complex is built around ACTR1A/ACTB filament and consists of an actin-related filament composed of a shoulder domain, a pointed end and a barbed end. Its length is defined by its flexible shoulder domain. The soulder is composed of 2 DCTN1 subunits, 4 DCTN2 and 2 DCTN3. DCTN1/p150(glued) binds directly to microtubules and to cytoplasmic dynein.

The protein localises to the cytoplasm. Its subcellular location is the cytoskeleton. Part of the dynactin complex that activates the molecular motor dynein for ultra-processive transport along microtubules. Plays a key role in dynein-mediated retrograde transport of vesicles and organelles along microtubules by recruiting and tethering dynein to microtubules. Binds to both dynein and microtubules providing a link between specific cargos, microtubules and dynein. Essential for targeting dynein to microtubule plus ends, recruiting dynein to membranous cargos and enhancing dynein processivity (the ability to move along a microtubule for a long distance without falling off the track). Can also act as a brake to slow the dynein motor during motility along the microtubule. Can regulate microtubule stability by promoting microtubule formation, nucleation and polymerization and by inhibiting microtubule catastrophe in neurons. Inhibits microtubule catastrophe by binding both to microtubules and to tubulin, leading to enhanced microtubule stability along the axon. Plays a role in metaphase spindle orientation. Plays a role in centriole cohesion and subdistal appendage organization and function. Its recruitment to the centriole in a KIF3A-dependent manner is essential for the maintenance of centriole cohesion and the formation of subdistal appendage. Also required for microtubule anchoring at the mother centriole. Plays a role in primary cilia formation. The chain is Dynactin subunit 1 from Drosophila melanogaster (Fruit fly).